A 260-amino-acid chain; its full sequence is DNA repair protein RecO (260 aa).

This sequence belongs to the RecO family.

Functionally, involved in DNA repair and RecF pathway recombination. This Chlorobaculum parvum (strain DSM 263 / NCIMB 8327) (Chlorobium vibrioforme subsp. thiosulfatophilum) protein is DNA repair protein RecO.